The following is a 212-amino-acid chain: Cytidylate kinase (212 aa).

7–15 (GPAASGKGT) provides a ligand contact to ATP.

This sequence belongs to the cytidylate kinase family. Type 1 subfamily.

Its subcellular location is the cytoplasm. It carries out the reaction CMP + ATP = CDP + ADP. The enzyme catalyses dCMP + ATP = dCDP + ADP. In Rhodopseudomonas palustris (strain BisB18), this protein is Cytidylate kinase.